A 251-amino-acid polypeptide reads, in one-letter code: Fibroblast growth factor 23 (251 aa).

A signal peptide spans 1-24; it reads MLGARLRLWVCALCSVCSMSVLRA. A disulfide bond links Cys95 and Cys113. O-linked (GalNAc) threonine glycans are attached at residues Thr171 and Thr178. Residues 172–221 form a disordered region; sequence PIPRRHTRSAEDDSERDPLNVLKPRARMTPAPASCSQELPSAEDNSPMAS. Phosphoserine; by FAM20C is present on Ser180. Residues 205 to 219 are compositionally biased toward polar residues; sequence SCSQELPSAEDNSPM.

This sequence belongs to the heparin-binding growth factors family. Interacts with FGFR1, FGFR2, FGFR3 and FGFR4. Affinity between fibroblast growth factors (FGFs) and their receptors is increased by KL and heparan sulfate glycosaminoglycans that function as coreceptors. Post-translationally, following secretion this protein is inactivated by cleavage into a N-terminal fragment and a C-terminal fragment. The processing is effected by proprotein convertases. O-glycosylated at Thr-171 and Thr-178 by GALNT3 and glycosylation of Thr-178 requires previous glycosylation at Thr171. Glycosylation is necessary for secretion; it blocks processing by proprotein convertases when the O-glycan is alpha 2,6-sialylated. Competition between proprotein convertase cleavage and block of cleavage by O-glycosylation determines the level of secreted active FGF23. In terms of processing, phosphorylation at Ser-180 mediated by FAM20C slows down glycosylation at Thr-178 notably. In terms of tissue distribution, expressed in osteogenic cells particularly during phases of active bone remodeling. In adult trabecular bone, expressed in osteocytes and flattened bone-lining cells (inactive osteoblasts).

The protein localises to the secreted. Functionally, regulator of phosphate homeostasis. Inhibits renal tubular phosphate transport by reducing SLC34A1 levels. Up-regulates EGR1 expression in the presence of KL. Acts directly on the parathyroid to decrease PTH secretion. Regulator of vitamin-D metabolism. Negatively regulates osteoblast differentiation and matrix mineralization. The chain is Fibroblast growth factor 23 (FGF23) from Homo sapiens (Human).